Here is a 296-residue protein sequence, read N- to C-terminus: MNWPALKERINLYEKLMRLDKPIGILLLLWPTLWALWLSALGRPNWIVVWIFILGTVLMRSAGCVINDYADRDFDKHVERTKERPLTAGKVTTKEALALFAGLSLLSFLLVVFLGNTLVIWLSLPAVFLAASYPFTKRFFAIPQAYLGVAFGFGIPMAYAAHLGEVPAEAWWLLLANVFWAVAYDTEYAMVDRDDDLKIGIKTSAITFGRFDVAAVMLCYGVTLAIIGGIGYSLNRGPAFYAGLAVATCIMGVHYTWIRGRERMPCFKAFLHNNWVGLSIFVGIVVDFLVSGRNLW.

Helical transmembrane passes span 22–42 (PIGI…SALG), 46–66 (WIVV…GCVI), 99–121 (LFAG…LVIW), 139–159 (FFAI…PMAY), 163–183 (LGEV…WAVA), 211–231 (FDVA…GGIG), 238–258 (PAFY…YTWI), and 270–290 (FLHN…DFLV).

The protein belongs to the UbiA prenyltransferase family. Mg(2+) is required as a cofactor.

Its subcellular location is the cell inner membrane. It carries out the reaction all-trans-octaprenyl diphosphate + 4-hydroxybenzoate = 4-hydroxy-3-(all-trans-octaprenyl)benzoate + diphosphate. The protein operates within cofactor biosynthesis; ubiquinone biosynthesis. Its function is as follows. Catalyzes the prenylation of para-hydroxybenzoate (PHB) with an all-trans polyprenyl group. Mediates the second step in the final reaction sequence of ubiquinone-8 (UQ-8) biosynthesis, which is the condensation of the polyisoprenoid side chain with PHB, generating the first membrane-bound Q intermediate 3-octaprenyl-4-hydroxybenzoate. This Dechloromonas aromatica (strain RCB) protein is 4-hydroxybenzoate octaprenyltransferase.